Reading from the N-terminus, the 506-residue chain is Anaerobic nitric oxide reductase transcription regulator NorR (506 aa).

The residue at position 57 (D57) is a 4-aspartylphosphate. Positions 187 to 416 (MIGLSPAMTQ…LEHAIHRAVV (230 aa)) constitute a Sigma-54 factor interaction domain. ATP contacts are provided by residues 215–222 (GETGTGKE) and 278–287 (ADNGTLFLDE). Positions 481 to 500 (WAASARALETDVANLHRLAK) form a DNA-binding region, H-T-H motif.

It participates in nitrogen metabolism; nitric oxide reduction. Its function is as follows. Required for the expression of anaerobic nitric oxide (NO) reductase, acts as a transcriptional activator for at least the norVW operon. Activation also requires sigma-54. The polypeptide is Anaerobic nitric oxide reductase transcription regulator NorR (Salmonella gallinarum (strain 287/91 / NCTC 13346)).